The sequence spans 241 residues: DNA-binding dual master transcriptional regulator RpaA (241 aa).

The Response regulatory domain maps to 3–119; the sequence is RILIIDDDPA…EMLARVRALL (117 aa). D52 carries the 4-aspartylphosphate modification. Residues 132 to 231 constitute a DNA-binding region (ompR/PhoB-type); the sequence is SEILNQGPLT…VYGAGYCLEL (100 aa).

As to quaternary structure, interacts with reduced ferredoxin (petF). Interacts with CikA, RpaB, SasA, Sll0038 (pixG) and a number of other proteins. Post-translationally, phosphorylated by SasA; phosphorylation is maximal when KaiC phosphorylation is active during the circadian cycle. Dephosphorylated by CikA. CikA and SasA cooperation generates RpaA activity oscillation that is distinct from that generated by CikA or SasA alone and offset from the rhythm of KaiC phosphorylation.

Its subcellular location is the cytoplasm. Its function is as follows. Response regulator of 2 two-component regulatory systems SasA/RpaA and CikA/RpaA involved in genome-wide circadian gene expression. The histidine kinases have opposing effects modulated by the clock oscillator proteins; SasA phosphorylates RpaA (stimulated by fully phosphorylated KaiC1) while CikA dephosphorylates phospho-RpaA (stimulated by the phospho-Ser-432-KaiC1-KaiB complex). The RpaA regulon is about 300 genes, and includes itself, cikA, sigE, sigG, genes involved in photosynthesis, carbon metabolism in the light and dark, phototaxis, CRISPR arrays 2 and 3 as well as nearly 90 ncRNAs. Genes are up- or down-regulated in its absence. Involved in regulation of primary sugar and amino acid metabolism and in adaptation to light changes. Regulates the accumulation of the monomeric photosystem I and the D1 protein under high light conditions. Overexpression causes cells to grow more slowly, increases levels of transcripts for clock oscillator genes in the light and the dark, increases levels of SigE protein, increases accumulation of sugar catabolic enzymes in the dark with concomitant decreases in most sugar metabolites. Plays a role in cell division; overexpression from the psbAII promoter increases expression of some cell-division-related genes, alters cell volume and changes the outer cell membrane and cell wall appearance. This is DNA-binding dual master transcriptional regulator RpaA from Synechocystis sp. (strain ATCC 27184 / PCC 6803 / Kazusa).